Consider the following 475-residue polypeptide: Ribulose bisphosphate carboxylase large chain (475 aa).

The propeptide occupies 1–2; that stretch reads MS. Position 3 is an N-acetylproline (Pro-3). An N6,N6,N6-trimethyllysine modification is found at Lys-14. 2 residues coordinate substrate: Asn-123 and Thr-173. Lys-175 functions as the Proton acceptor in the catalytic mechanism. Position 177 (Lys-177) interacts with substrate. Residues Lys-201, Asp-203, and Glu-204 each coordinate Mg(2+). The residue at position 201 (Lys-201) is an N6-carboxylysine. His-294 acts as the Proton acceptor in catalysis. Residues Arg-295, His-327, and Ser-379 each coordinate substrate.

Belongs to the RuBisCO large chain family. Type I subfamily. Heterohexadecamer of 8 large chains and 8 small chains; disulfide-linked. The disulfide link is formed within the large subunit homodimers. Requires Mg(2+) as cofactor. The disulfide bond which can form in the large chain dimeric partners within the hexadecamer appears to be associated with oxidative stress and protein turnover.

It is found in the plastid. Its subcellular location is the chloroplast. It catalyses the reaction 2 (2R)-3-phosphoglycerate + 2 H(+) = D-ribulose 1,5-bisphosphate + CO2 + H2O. The catalysed reaction is D-ribulose 1,5-bisphosphate + O2 = 2-phosphoglycolate + (2R)-3-phosphoglycerate + 2 H(+). RuBisCO catalyzes two reactions: the carboxylation of D-ribulose 1,5-bisphosphate, the primary event in carbon dioxide fixation, as well as the oxidative fragmentation of the pentose substrate in the photorespiration process. Both reactions occur simultaneously and in competition at the same active site. In Adiantum capillus-veneris (Maidenhair fern), this protein is Ribulose bisphosphate carboxylase large chain.